Reading from the N-terminus, the 197-residue chain is Rac-like GTP-binding protein ARAC1 (197 aa).

A GTP-binding site is contributed by 13 to 20 (GDGAVGKT). Positions 35 to 43 (YVPTVFDNF) match the Effector region motif. GTP contacts are provided by residues 60 to 64 (DTAGQ) and 118 to 121 (TKLD). Cys194 is subject to Cysteine methyl ester. A lipid anchor (S-geranylgeranyl cysteine) is attached at Cys194. A propeptide spans 195–197 (SIL) (removed in mature form).

It belongs to the small GTPase superfamily. Rho family. In terms of assembly, interacts with SPK1. In terms of tissue distribution, ubiquitous.

Its subcellular location is the cytoplasm. It localises to the membrane. In terms of biological role, inactive GDP-bound Rho GTPases reside in the cytosol, are found in a complex with Rho GDP-dissociation inhibitors (Rho GDIs), and are released from the GDI protein in order to translocate to membranes upon activation. This chain is Rac-like GTP-binding protein ARAC1 (ARAC1), found in Arabidopsis thaliana (Mouse-ear cress).